The sequence spans 29 residues: Thrombin-like enzyme collinein-2 (29 aa).

As to quaternary structure, monomer. In terms of tissue distribution, expressed by the venom gland.

It localises to the secreted. Functionally, thrombin-like snake venom serine protease. The chain is Thrombin-like enzyme collinein-2 from Crotalus durissus collilineatus (Brazilian rattlesnake).